Here is a 344-residue protein sequence, read N- to C-terminus: Phenylalanine--tRNA ligase alpha subunit (344 aa).

E256 contributes to the Mg(2+) binding site.

This sequence belongs to the class-II aminoacyl-tRNA synthetase family. Phe-tRNA synthetase alpha subunit type 1 subfamily. In terms of assembly, tetramer of two alpha and two beta subunits. It depends on Mg(2+) as a cofactor.

The protein resides in the cytoplasm. The enzyme catalyses tRNA(Phe) + L-phenylalanine + ATP = L-phenylalanyl-tRNA(Phe) + AMP + diphosphate + H(+). The polypeptide is Phenylalanine--tRNA ligase alpha subunit (Bacillus cytotoxicus (strain DSM 22905 / CIP 110041 / 391-98 / NVH 391-98)).